The following is a 93-amino-acid chain: UPF0358 protein BH2626 (93 aa).

This sequence belongs to the UPF0358 family.

This chain is UPF0358 protein BH2626, found in Halalkalibacterium halodurans (strain ATCC BAA-125 / DSM 18197 / FERM 7344 / JCM 9153 / C-125) (Bacillus halodurans).